Here is a 177-residue protein sequence, read N- to C-terminus: NAD(P)H-quinone oxidoreductase subunit 6, chloroplastic (177 aa).

5 helical membrane passes run 10 to 30, 33 to 53, 61 to 81, 92 to 112, and 152 to 172; these read ILVV…VLFT, IYSA…YILL, AQLL…VMFM, LWTV…FLLI, and FFLP…GAIS.

This sequence belongs to the complex I subunit 6 family. NDH is composed of at least 16 different subunits, 5 of which are encoded in the nucleus.

Its subcellular location is the plastid. The protein localises to the chloroplast thylakoid membrane. It carries out the reaction a plastoquinone + NADH + (n+1) H(+)(in) = a plastoquinol + NAD(+) + n H(+)(out). It catalyses the reaction a plastoquinone + NADPH + (n+1) H(+)(in) = a plastoquinol + NADP(+) + n H(+)(out). NDH shuttles electrons from NAD(P)H:plastoquinone, via FMN and iron-sulfur (Fe-S) centers, to quinones in the photosynthetic chain and possibly in a chloroplast respiratory chain. The immediate electron acceptor for the enzyme in this species is believed to be plastoquinone. Couples the redox reaction to proton translocation, and thus conserves the redox energy in a proton gradient. This Lemna minor (Common duckweed) protein is NAD(P)H-quinone oxidoreductase subunit 6, chloroplastic (ndhG).